The primary structure comprises 129 residues: Small ribosomal subunit protein uS11 (129 aa).

Belongs to the universal ribosomal protein uS11 family. In terms of assembly, part of the 30S ribosomal subunit. Interacts with proteins S7 and S18. Binds to IF-3.

Located on the platform of the 30S subunit, it bridges several disparate RNA helices of the 16S rRNA. Forms part of the Shine-Dalgarno cleft in the 70S ribosome. The sequence is that of Small ribosomal subunit protein uS11 from Escherichia fergusonii (strain ATCC 35469 / DSM 13698 / CCUG 18766 / IAM 14443 / JCM 21226 / LMG 7866 / NBRC 102419 / NCTC 12128 / CDC 0568-73).